Consider the following 114-residue polypeptide: uncharacterized protein (114 aa).

This is an uncharacterized protein from Human cytomegalovirus (strain AD169) (HHV-5).